The primary structure comprises 293 residues: Ribosomal protein L11 methyltransferase (293 aa).

Positions 145, 166, 188, and 230 each coordinate S-adenosyl-L-methionine.

It belongs to the methyltransferase superfamily. PrmA family.

The protein localises to the cytoplasm. The enzyme catalyses L-lysyl-[protein] + 3 S-adenosyl-L-methionine = N(6),N(6),N(6)-trimethyl-L-lysyl-[protein] + 3 S-adenosyl-L-homocysteine + 3 H(+). In terms of biological role, methylates ribosomal protein L11. This chain is Ribosomal protein L11 methyltransferase, found in Salmonella agona (strain SL483).